A 500-amino-acid polypeptide reads, in one-letter code: Aspartyl/glutamyl-tRNA(Asn/Gln) amidotransferase subunit B (500 aa).

Belongs to the GatB/GatE family. GatB subfamily. Heterotrimer of A, B and C subunits.

The catalysed reaction is L-glutamyl-tRNA(Gln) + L-glutamine + ATP + H2O = L-glutaminyl-tRNA(Gln) + L-glutamate + ADP + phosphate + H(+). The enzyme catalyses L-aspartyl-tRNA(Asn) + L-glutamine + ATP + H2O = L-asparaginyl-tRNA(Asn) + L-glutamate + ADP + phosphate + 2 H(+). In terms of biological role, allows the formation of correctly charged Asn-tRNA(Asn) or Gln-tRNA(Gln) through the transamidation of misacylated Asp-tRNA(Asn) or Glu-tRNA(Gln) in organisms which lack either or both of asparaginyl-tRNA or glutaminyl-tRNA synthetases. The reaction takes place in the presence of glutamine and ATP through an activated phospho-Asp-tRNA(Asn) or phospho-Glu-tRNA(Gln). The sequence is that of Aspartyl/glutamyl-tRNA(Asn/Gln) amidotransferase subunit B from Brucella ovis (strain ATCC 25840 / 63/290 / NCTC 10512).